Here is a 384-residue protein sequence, read N- to C-terminus: S-adenosylmethionine synthase (384 aa).

H15 contacts ATP. D17 provides a ligand contact to Mg(2+). E43 contributes to the K(+) binding site. The L-methionine site is built by E56 and Q99. The tract at residues 99–109 (QSPDINQGVDR) is flexible loop. ATP-binding positions include 164-166 (DAK), 230-231 (RF), D239, 245-246 (RK), A262, and K266. Residue D239 coordinates L-methionine. Position 270 (K270) interacts with L-methionine.

This sequence belongs to the AdoMet synthase family. In terms of assembly, homotetramer; dimer of dimers. Mg(2+) is required as a cofactor. The cofactor is K(+).

It localises to the cytoplasm. It carries out the reaction L-methionine + ATP + H2O = S-adenosyl-L-methionine + phosphate + diphosphate. It participates in amino-acid biosynthesis; S-adenosyl-L-methionine biosynthesis; S-adenosyl-L-methionine from L-methionine: step 1/1. Its function is as follows. Catalyzes the formation of S-adenosylmethionine (AdoMet) from methionine and ATP. The overall synthetic reaction is composed of two sequential steps, AdoMet formation and the subsequent tripolyphosphate hydrolysis which occurs prior to release of AdoMet from the enzyme. In Shigella boydii serotype 18 (strain CDC 3083-94 / BS512), this protein is S-adenosylmethionine synthase.